The primary structure comprises 782 residues: Chondroitin proteoglycan 4 (782 aa).

A signal peptide spans 1 to 18 (MRLVYSLIFLLFIPFSHP). N-linked (GlcNAc...) asparagine glycosylation is found at Asn-76, Asn-208, Asn-462, Asn-468, Asn-474, and Asn-503. Residues 513–726 (ISEKSTEESS…EDQGSGNYKK (214 aa)) are disordered. Composition is skewed to low complexity over residues 520 to 532 (ESSGSSGEMSGDG), 548 to 566 (SGSSGDNSGEFNSSGSSGE), 573 to 612 (SSGSEDQGSGNYKMIESIESSGEFSGSSGEGSGDTASSDT), 662 to 672 (FGESSGSSGES), and 688 to 722 (SGSSGDNSGDFNSSGSSGEASGVGESSGSEDQGSG). N-linked (GlcNAc...) asparagine glycosylation is present at Asn-559. O-linked (Xyl...) (chondroitin sulfate) serine glycosylation is present at Ser-691. An N-linked (GlcNAc...) asparagine glycan is attached at Asn-699. 5 O-linked (Xyl...) (chondroitin sulfate) serine glycosylation sites follow: Ser-701, Ser-704, Ser-708, Ser-714, and Ser-721. A glycan (N-linked (GlcNAc...) asparagine) is linked at Asn-743.

This is Chondroitin proteoglycan 4 from Caenorhabditis elegans.